We begin with the raw amino-acid sequence, 98 residues long: Large ribosomal subunit protein bL25 (98 aa).

The tract at residues 1-23 (MANFVLNAQARAEDKQGKGASRR) is disordered.

Belongs to the bacterial ribosomal protein bL25 family. Part of the 50S ribosomal subunit; part of the 5S rRNA/L5/L18/L25 subcomplex. Contacts the 5S rRNA. Binds to the 5S rRNA independently of L5 and L18.

Its function is as follows. This is one of the proteins that binds to the 5S RNA in the ribosome where it forms part of the central protuberance. This is Large ribosomal subunit protein bL25 from Acinetobacter baumannii (strain AB307-0294).